The following is a 479-amino-acid chain: Xylose isomerase (479 aa).

H144 is an active-site residue. Mn(2+) is bound by residues E275, E311, H314, D339, D350, D352, and Y382.

Belongs to the xylose isomerase family. Homodimer. Requires Mn(2+) as cofactor.

The enzyme catalyses alpha-D-xylose = alpha-D-xylulofuranose. The polypeptide is Xylose isomerase (XYLA) (Hordeum vulgare (Barley)).